The chain runs to 678 residues: NADPH--cytochrome P450 reductase (678 aa).

Over 1–21 (MADSNMDAGTTTSEMVAEEVS) the chain is Lumenal. A helical membrane pass occupies residues 22-42 (LFSTTDVILFSLIVGVMTYWF). Residues 43-678 (LFRKKKEEVP…KGRYSLDVWS (636 aa)) lie on the Cytoplasmic side of the membrane. Phosphoserine is present on Ser63. One can recognise a Flavodoxin-like domain in the interval 80 to 224 (IIVFYGSQTG…DFITWREQFW (145 aa)). FMN contacts are provided by residues 86–91 (SQTGTA), 138–141 (ATYG), 173–182 (LGNKTYEHFN), and Asp208. The FAD-binding FR-type domain occupies 279–521 (KNPFLAVVTT…YVRKSQFRLP (243 aa)). Arg298 lines the NADP(+) pocket. Residues Arg424, 454–457 (RYYS), 472–474 (CAV), Tyr478, and 488–491 (GVAT) contribute to the FAD site. NADP(+) contacts are provided by residues Thr535, 596–597 (SR), 602–606 (KVYVQ), and Asp639. Trp677 lines the FAD pocket.

This sequence belongs to the NADPH--cytochrome P450 reductase family. It in the N-terminal section; belongs to the flavodoxin family. The protein in the C-terminal section; belongs to the flavoprotein pyridine nucleotide cytochrome reductase family. Requires FAD as cofactor. It depends on FMN as a cofactor.

The protein resides in the endoplasmic reticulum membrane. It carries out the reaction 2 oxidized [cytochrome P450] + NADPH = 2 reduced [cytochrome P450] + NADP(+) + H(+). In terms of biological role, this enzyme is required for electron transfer from NADP to cytochrome P450 in microsomes. It can also provide electron transfer to heme oxygenase and cytochrome B5. This chain is NADPH--cytochrome P450 reductase, found in Bos taurus (Bovine).